The following is a 181-amino-acid chain: ADP-ribosylation factor 1 (181 aa).

Gly-2 is subject to N-acetylglycine; alternate. Gly-2 carries the N-myristoyl glycine; alternate lipid modification. An important for the stable binding to the membranes region spans residues 3–16 (NIFANLFKGLFGKK). GTP contacts are provided by residues 24 to 32 (GLDAAGKTT), 126 to 129 (NKQD), and Ala-160.

This sequence belongs to the small GTPase superfamily. Arf family. In terms of assembly, interacts (when activated) with GGA1, GGA2 and GGA3; the interaction is required for proper subcellular location of GGA1, GGA2 and GGA3. Interacts with ARHGAP21, ASAP2, GGA1, HERC1, PRKCABP, PIP5K1B, TMED2, PSCD2, TMED10 and GRIA2. Interacts with ARFGAP1, which hydrolyzes GTP and thus, regulates its function. Interacts with PI4KB in the Golgi complex. Interacts with NCS1/FREQ in the Golgi and at the plasma membrane. Interacts with PLEKHA3. Interacts with PLEKHA8; the interaction, together with phosphatidylinositol 4-phosphate binding, is required for FAPP2-mediated glucosylceramide transfer activity. Interacts (activated) with PICK1 (via PDZ domain); the interaction blocks Arp2/3 complex inhibition. Interacts with IQSEC1. Interacts with C9orf72.

The protein localises to the golgi apparatus membrane. Its subcellular location is the synapse. It is found in the synaptosome. It localises to the postsynaptic density. It carries out the reaction GTP + H2O = GDP + phosphate + H(+). Alternates between an inactive GDP-bound form and an active GTP-bound form. Activated by guanine nucleotide-exchange factors (GEFs) and inactivated by GTPase-activating proteins (GAPs). Small GTPase involved in protein trafficking between different compartments. Modulates vesicle budding and uncoating within the Golgi complex. In its GTP-bound form, triggers the recruitment of coatomer proteins to the Golgi membrane. The hydrolysis of ARF1-bound GTP, which is mediated by ARFGAPs proteins, is required for dissociation of coat proteins from Golgi membranes and vesicles. The GTP-bound form interacts with PICK1 to limit PICK1-mediated inhibition of Arp2/3 complex activity; the function is linked to AMPA receptor (AMPAR) trafficking, regulation of synaptic plasticity of excitatory synapses and spine shrinkage during long-term depression (LTD). Plays a key role in the regulation of intestinal stem cells and gut microbiota, and is essential for maintaining intestinal homeostasis. Also plays a critical role in mast cell expansion but not in mast cell maturation by facilitating optimal mTORC1 activation. This is ADP-ribosylation factor 1 (ARF1) from Bos taurus (Bovine).